The sequence spans 670 residues: DNA ligase (670 aa).

NAD(+) is bound by residues 31 to 35 (DAEYD), 76 to 77 (SL), and glutamate 108. Lysine 110 (N6-AMP-lysine intermediate) is an active-site residue. 4 residues coordinate NAD(+): arginine 131, glutamate 166, lysine 271, and lysine 295. Residues cysteine 388, cysteine 391, cysteine 406, and cysteine 412 each contribute to the Zn(2+) site. The BRCT domain occupies 579–668 (NIGGSLSGKK…NTPALKKETS (90 aa)).

The protein belongs to the NAD-dependent DNA ligase family. LigA subfamily. Mg(2+) serves as cofactor. Requires Mn(2+) as cofactor.

The enzyme catalyses NAD(+) + (deoxyribonucleotide)n-3'-hydroxyl + 5'-phospho-(deoxyribonucleotide)m = (deoxyribonucleotide)n+m + AMP + beta-nicotinamide D-nucleotide.. Functionally, DNA ligase that catalyzes the formation of phosphodiester linkages between 5'-phosphoryl and 3'-hydroxyl groups in double-stranded DNA using NAD as a coenzyme and as the energy source for the reaction. It is essential for DNA replication and repair of damaged DNA. This is DNA ligase from Neorickettsia sennetsu (strain ATCC VR-367 / Miyayama) (Ehrlichia sennetsu).